The primary structure comprises 321 residues: MSTSNIVDALIIGGGPAGLSAALAFARQNQSAIVFDSGRYRNAATDYMHLIPGLDHKAPAEFRATARSQITDRYDKIRILEGVDIVAAKKTDADSFELSDEAGQTWNGRKLILATGVEDVMLDIPGYAELWGKSIVHCLYCKGYEQRGGSAGVLAVGPLGNVNMALHIARQETALSKRVTLYSNGNESLAGELVSAFGSATAMRTDARKIKEFVAGADGKGVAIRFEDGSEVVEDYLAHQAPVKAREGLADLLGLEKGPNGEVKVSSPFQQASVRGVFAAGDNGAMLKNVPNAVFSGHVAGQMASTQLLADLNGQKSIFPI.

Residues glycine 14 to alanine 17, aspartate 36 to arginine 41, histidine 49, and alanine 114 each bind FAD. Cysteine 138 and cysteine 141 are joined by a disulfide. Residues aspartate 282 and asparagine 289–valine 290 contribute to the FAD site.

Belongs to the class-II pyridine nucleotide-disulfide oxidoreductase family. Homodimer. Requires FAD as cofactor.

The protein operates within secondary metabolite biosynthesis. In terms of biological role, thioredoxin reductase; part of the gene cluster that mediates the biosynthesis of an unusual class of epipolythiodioxopiperazines (ETPs) lacking the reactive thiol group important for toxicity. Firstly, L-tyrosine is prenylated by tcpD, before undergoing condensation with L-glycine in a reaction catalyzed by the NRPS tcpP leading to the diketopiperazine (DKP) backbone. Afterwards the alpha-carbon of tyrosine is oxidized by the cytochrome P450 tcpC to form a hydroxyl group. However, in contrast other ETP biosynthesis pathways studied so far, tcpC is not able to bishydroxylate the DKP at both alpha-carbon positions, but hydroxylates the alpha-carbon of the tyrosine part and the nitrogen of the glycine part. The next steps involve an alpha,beta-elimination reaction catalyzed by tcpI, a methylation by the methyltransferase tcpN the action of the four enzyme cascade tcpG/K/J/I. Due to a dysfunctional cytochrome P450 monooxygenase tcpC, the pathway leads to the biosynthesis of probable non-toxic metabolites lacking the reactive thiol group. The sequence is that of Thioredoxin reductase tcpT from Claviceps purpurea (strain 20.1) (Ergot fungus).